The chain runs to 279 residues: uncharacterized protein (279 aa).

Residues 60–92 form a disordered region; it reads RKANKLNNKQDSTFFNSASGETNNTILPPGVKN. Positions 70–85 are enriched in polar residues; it reads DSTFFNSASGETNNTI. The next 3 helical transmembrane spans lie at 156 to 176, 202 to 222, and 237 to 257; these read IVGY…AVMN, ISIF…ILFL, and FIWI…LLMI.

The protein localises to the cell membrane. This is an uncharacterized protein from Mycoplasma genitalium (strain ATCC 33530 / DSM 19775 / NCTC 10195 / G37) (Mycoplasmoides genitalium).